Here is a 157-residue protein sequence, read N- to C-terminus: Peptide methionine sulfoxide reductase MsrA (157 aa).

Cys13 is an active-site residue.

Belongs to the MsrA Met sulfoxide reductase family.

The catalysed reaction is L-methionyl-[protein] + [thioredoxin]-disulfide + H2O = L-methionyl-(S)-S-oxide-[protein] + [thioredoxin]-dithiol. The enzyme catalyses [thioredoxin]-disulfide + L-methionine + H2O = L-methionine (S)-S-oxide + [thioredoxin]-dithiol. Its function is as follows. Has an important function as a repair enzyme for proteins that have been inactivated by oxidation. Catalyzes the reversible oxidation-reduction of methionine sulfoxide in proteins to methionine. The protein is Peptide methionine sulfoxide reductase MsrA of Methanococcus maripaludis (strain C7 / ATCC BAA-1331).